The following is a 209-amino-acid chain: Aspartate kinase-like protein lolA1 (209 aa).

Residues 1–11 (MLDESPMRKGD) show a composition bias toward basic and acidic residues. The segment at 1-27 (MLDESPMRKGDSVSNDQSNPESNASVS) is disordered. The segment covering 12–27 (SVSNDQSNPESNASVS) has biased composition (polar residues).

Belongs to the aspartokinase family.

The protein operates within alkaloid biosynthesis. Functionally, aspartokinase-like protein; part of the gene cluster that mediates the biosynthesis of loline alkaloids, potent insecticidal agents composed of a pyrrolizidine ring system and an uncommon ether bridge linking carbons 2 and 7. Lolines are structurally differentiated by the various modifications of the L-amino group and include norloline, loline, N-methylloline, N-acetylloline, N-acetylnorloline, and N-formylloline. The first committed step is the condensation of O-acetyl-L-homoserine (derived from L-aspartic acid) and L-proline, probably catalyzed by the gamma-type pyridoxal 5'-phosphate(PLP)-dependent enzyme lolC, to give the diamino diacid, NACPP. Ensuing cyclization, decarboxylation, and acetylation steps yield 1-exo-acetamidopyrrolizidine (AcAP). LolO is required for installation of the ether bridge upon the pathway intermediate, 1-exo-acetamidopyrrolizidine (AcAP). In sequential 2-oxoglutarate- and O(2)-consuming steps, lolO removes hydrogens from C2 and C7 of AcAP to form both carbon-oxygen bonds in N-acetylnorloline (NANL), the precursor to all other lolines. The enzymes lolD, lolE, lolF and lolT have also been proposed to be involved in the ether-bridge installation. Further processing of the exocyclic moiety of NANL by fungal N-acetamidase (LolN), methyltransferase (LolM), and cytochrome P450 (LolP) enzymes, with occasional involvement of a plant acetyltransferase, generates the other known lolines. LolN transforms NANL to norlonine which is monomethylated and dimethylated to respectively lonine and N-methyllonine (NML) by lolM. LolP catalyzes hydroxylation of the methyl group in N-methylloline (NML) and further oxygenation to N-formylloline (NFL). A plant acetyltransferase is responsible for the acetylation of loline to form N-acetylloline (NAL). LolA might interact with aspartate kinase to prevent feedback inhibition of its activity by these end products and thereby promote production of L-homoserine from L-aspartate. The chain is Aspartate kinase-like protein lolA1 from Epichloe uncinata (Endophyte fungus).